Here is a 360-residue protein sequence, read N- to C-terminus: G-protein coupled receptor 15 (360 aa).

Residues 1–33 (MDPEETSVYLDYYYATSPNPDIRETHSHVPYTS) are Extracellular-facing. The chain crosses the membrane as a helical span at residues 34 to 54 (VFLPVFYTAVFLTGVLGNLVL). The Cytoplasmic segment spans residues 55-69 (MGALHFKPGSRRLID). Residues 70–90 (IFIINLAASDFIFLVTLPLWV) form a helical membrane-spanning segment. At 91–120 (DKEASLGLWRTGSFLCKGSSYMISVNMHCS) the chain is on the extracellular side. The chain crosses the membrane as a helical span at residues 121–141 (VFLLTCMSVDRYLAIVCPVVS). The Cytoplasmic portion of the chain corresponds to 142–149 (RKFRRTDC). A helical transmembrane segment spans residues 150-170 (AYVVCASIWFISCLLGLPTLL). Topologically, residues 171 to 192 (SRELTLIDDKPYCAEKKATPLK) are extracellular. Residues 193–213 (LIWSLVALIFTFFVPLLSIVT) traverse the membrane as a helical segment. Topologically, residues 214–239 (CYCCIARKLCAHYQQSGKHNKKLKKS) are cytoplasmic. Residues 240-260 (IKIIFIVVAAFLVSWLPFNTF) form a helical membrane-spanning segment. The Extracellular segment spans residues 261–284 (KLLAIVSGLQQERYFPSAMLQLGM). The helical transmembrane segment at 285-305 (EVSGPLAFANSCVNPFIYYIF) threads the bilayer. The Cytoplasmic portion of the chain corresponds to 306–360 (DSYIRRAIVHCLCPCLKNYDFGSSTETSDSHLTKALSTFIHAEDFTRRRKRSVSL). Serine 359 carries the phosphoserine modification.

Belongs to the G-protein coupled receptor 1 family. In terms of assembly, interacts with adapter YWHAE; this interaction promotes ER-to-Golgi transport of GPR15. In terms of processing, phosphorylation is necessary for YWHAE binding and efficient surface expression. Post-translationally, O-glycosylated. Sialylated O-glycans in the N-terminal tail inhibits binding of GPR15LG. Sulfation is required for efficient binding of GPR15LG.

The protein localises to the cell membrane. In terms of biological role, g protein-coupled receptor that plays an important role in immune homeostasis. Acts via its natural ligand GPR15LG, a chemokine-like polypeptide strongly expressed in gastrointestinal tissues. GPR15-GPR15LG signaling axis regulates intestinal homeostasis and inflammation through the migration of immune cells. Controls thereby the specific homing of T-cells, particularly FOXP3+ regulatory T-cells (Tregs), to the large intestine lamina propria. Also required for skin localization of thymus-derived dendritic epidermal T-cells. Plays an important role in mediating cytoprotective function as well as angiogenesis of thrombomodulin. Mechanistically, preferentially signals through the Gi/o pathway to inhibit adenylate cyclase activity and activate a phosphatidylinositol-calcium second messenger system that regulates the release of Ca(2+) ions from intracellular stores. This Macaca mulatta (Rhesus macaque) protein is G-protein coupled receptor 15 (GPR15).